A 591-amino-acid polypeptide reads, in one-letter code: uncharacterized protein (591 aa).

A compositionally biased stretch (gly residues) spans 1-10 (MSIRGVGGNG). Disordered stretches follow at residues 1–37 (MSIR…KVED), 110–135 (RSSA…GYRE), 324–344 (EESG…AQGP), and 487–517 (GHYQ…TPPL). Polar residues predominate over residues 11–32 (NSRIPSHNGDGSNRRSQNTKGN). The segment covering 110–132 (RSSATRAAESGSSSRTARGASSG) has biased composition (low complexity). The span at 490–507 (QDPRASDYDLPRASDYDL) shows a compositional bias: basic and acidic residues.

It to C.muridarum TC_0268.

This is an uncharacterized protein from Chlamydia trachomatis serovar D (strain ATCC VR-885 / DSM 19411 / UW-3/Cx).